A 235-amino-acid polypeptide reads, in one-letter code: Pro-opiomelanocortin (235 aa).

Positions 1–26 (MPRFCNSRSGALLLALLLQTSIDVWS) are cleaved as a signal peptide. Position 87 is a phenylalanine amide (Phe87). Residues 88 to 128 (GPRNSSSAGGSAQRRAEEETAGGDGRPEPSPREGKRSYSME) are disordered. The span at 112-128 (GRPEPSPREGKRSYSME) shows a compositional bias: basic and acidic residues. Ser124 is subject to N-acetylserine; in Corticotropin. Val136 bears the Valine amide mark. Asn152 is a glycosylation site (N-linked (GlcNAc...) asparagine). Position 154 is a phosphoserine (Ser154). A disordered region spans residues 169–209 (EQPDGLEQVLEPDTEKADGPYRVEHFRWGNPPKDKRYGGFM). The span at 181–205 (DTEKADGPYRVEHFRWGNPPKDKRY) shows a compositional bias: basic and acidic residues.

Belongs to the POMC family. Post-translationally, specific enzymatic cleavages at paired basic residues yield the different active peptides. In terms of tissue distribution, ACTH and MSH are produced by the pituitary gland.

Its subcellular location is the secreted. In terms of biological role, stimulates the adrenal glands to release cortisol. Anorexigenic peptide. Increases the pigmentation of skin by increasing melanin production in melanocytes. Functionally, increases the pigmentation of skin by increasing melanin production in melanocytes. Its function is as follows. Endogenous orexigenic opiate. In terms of biological role, endogenous opiate. This is Pro-opiomelanocortin (Pomc) from Rattus norvegicus (Rat).